We begin with the raw amino-acid sequence, 207 residues long: Ribosomal RNA small subunit methyltransferase G (207 aa).

S-adenosyl-L-methionine-binding positions include Gly-73, Leu-78, 124 to 125 (VE), and Arg-139.

The protein belongs to the methyltransferase superfamily. RNA methyltransferase RsmG family.

Its subcellular location is the cytoplasm. The catalysed reaction is guanosine(527) in 16S rRNA + S-adenosyl-L-methionine = N(7)-methylguanosine(527) in 16S rRNA + S-adenosyl-L-homocysteine. Specifically methylates the N7 position of guanine in position 527 of 16S rRNA. This chain is Ribosomal RNA small subunit methyltransferase G, found in Escherichia coli O1:K1 / APEC.